Here is a 205-residue protein sequence, read N- to C-terminus: Adenylyl-sulfate kinase (205 aa).

G31 to S38 contacts ATP. S105 acts as the Phosphoserine intermediate in catalysis.

Belongs to the APS kinase family.

It carries out the reaction adenosine 5'-phosphosulfate + ATP = 3'-phosphoadenylyl sulfate + ADP + H(+). It functions in the pathway sulfur metabolism; hydrogen sulfide biosynthesis; sulfite from sulfate: step 2/3. Catalyzes the synthesis of activated sulfate. This chain is Adenylyl-sulfate kinase, found in Shewanella denitrificans (strain OS217 / ATCC BAA-1090 / DSM 15013).